The primary structure comprises 393 residues: MELKNLAQTLLPRLVEIRRHLHAHPELSGQEYQTAAYVAGVLSSCGLHVEEAIGKTGVVGQLSGKGDDPRLLAIRTDMDALPIEEMVSLPFASRHPGVMHACGHDIHTTLGLGTAMVLSQMGHRLPGDVRFLFQPAEEIAQGASWMIQDGAMKGVSHILGVHVFPSIPAQQVGIRYGALTAAADDLEIFIQGESGHGARPHEAIDAIWIAAQVITALQQAISRTQNPLRPMVLSLGQISGGRAPNVIADQVRMAGTVRSLHPETHAQLPQWIEGIVANVCQTYGAKYEVNYRRGVPSVQNDAQLNKLLENAVREAWGESALQIIPEPSLGAEDFALYLEHAPGAMFRLGTGFGDRQMNHPLHHPRFEADEAAILTGVVTLSYAAWQYWQNIAI.

This sequence belongs to the peptidase M20 family.

This chain is Probable hydrolase sll0100, found in Synechocystis sp. (strain ATCC 27184 / PCC 6803 / Kazusa).